The primary structure comprises 347 residues: Ribosomal RNA small subunit methyltransferase C (347 aa).

Belongs to the methyltransferase superfamily. RsmC family. In terms of assembly, monomer.

It is found in the cytoplasm. The catalysed reaction is guanosine(1207) in 16S rRNA + S-adenosyl-L-methionine = N(2)-methylguanosine(1207) in 16S rRNA + S-adenosyl-L-homocysteine + H(+). Functionally, specifically methylates the guanine in position 1207 of 16S rRNA in the 30S particle. The chain is Ribosomal RNA small subunit methyltransferase C from Shewanella baltica (strain OS155 / ATCC BAA-1091).